The primary structure comprises 246 residues: tRNA (guanine-N(1)-)-methyltransferase (246 aa).

S-adenosyl-L-methionine contacts are provided by residues Gly113 and 133 to 138; that span reads IGDYVL.

Belongs to the RNA methyltransferase TrmD family. As to quaternary structure, homodimer.

Its subcellular location is the cytoplasm. The enzyme catalyses guanosine(37) in tRNA + S-adenosyl-L-methionine = N(1)-methylguanosine(37) in tRNA + S-adenosyl-L-homocysteine + H(+). Functionally, specifically methylates guanosine-37 in various tRNAs. This Yersinia enterocolitica serotype O:8 / biotype 1B (strain NCTC 13174 / 8081) protein is tRNA (guanine-N(1)-)-methyltransferase.